We begin with the raw amino-acid sequence, 158 residues long: Crossover junction endodeoxyribonuclease RuvC (158 aa).

Residues Asp-7, Glu-66, and Asp-139 contribute to the active site. The Mg(2+) site is built by Asp-7, Glu-66, and Asp-139.

Belongs to the RuvC family. Homodimer which binds Holliday junction (HJ) DNA. The HJ becomes 2-fold symmetrical on binding to RuvC with unstacked arms; it has a different conformation from HJ DNA in complex with RuvA. In the full resolvosome a probable DNA-RuvA(4)-RuvB(12)-RuvC(2) complex forms which resolves the HJ. Requires Mg(2+) as cofactor.

The protein resides in the cytoplasm. The catalysed reaction is Endonucleolytic cleavage at a junction such as a reciprocal single-stranded crossover between two homologous DNA duplexes (Holliday junction).. Its function is as follows. The RuvA-RuvB-RuvC complex processes Holliday junction (HJ) DNA during genetic recombination and DNA repair. Endonuclease that resolves HJ intermediates. Cleaves cruciform DNA by making single-stranded nicks across the HJ at symmetrical positions within the homologous arms, yielding a 5'-phosphate and a 3'-hydroxyl group; requires a central core of homology in the junction. The consensus cleavage sequence is 5'-(A/T)TT(C/G)-3'. Cleavage occurs on the 3'-side of the TT dinucleotide at the point of strand exchange. HJ branch migration catalyzed by RuvA-RuvB allows RuvC to scan DNA until it finds its consensus sequence, where it cleaves and resolves the cruciform DNA. The polypeptide is Crossover junction endodeoxyribonuclease RuvC (Carboxydothermus hydrogenoformans (strain ATCC BAA-161 / DSM 6008 / Z-2901)).